An 81-amino-acid chain; its full sequence is Photosystem I iron-sulfur center (81 aa).

4Fe-4S ferredoxin-type domains lie at 2-31 (SHTV…MVPW) and 39-68 (VASS…IRVY). Residues Cys11, Cys14, Cys17, Cys21, Cys48, Cys51, Cys54, and Cys58 each contribute to the [4Fe-4S] cluster site.

In terms of assembly, the cyanobacterial PSI reaction center is composed of one copy each of PsaA,B,C,D,E,F,I,J,K,L,M and X, and forms trimeric complexes. It depends on [4Fe-4S] cluster as a cofactor.

The protein resides in the cellular thylakoid membrane. The catalysed reaction is reduced [plastocyanin] + hnu + oxidized [2Fe-2S]-[ferredoxin] = oxidized [plastocyanin] + reduced [2Fe-2S]-[ferredoxin]. Functionally, apoprotein for the two 4Fe-4S centers FA and FB of photosystem I (PSI); essential for photochemical activity. FB is the terminal electron acceptor of PSI, donating electrons to ferredoxin. The C-terminus interacts with PsaA/B/D and helps assemble the protein into the PSI complex. Required for binding of PsaD and PsaE to PSI. PSI is a plastocyanin/cytochrome c6-ferredoxin oxidoreductase, converting photonic excitation into a charge separation, which transfers an electron from the donor P700 chlorophyll pair to the spectroscopically characterized acceptors A0, A1, FX, FA and FB in turn. This chain is Photosystem I iron-sulfur center, found in Trichormus variabilis (strain ATCC 29413 / PCC 7937) (Anabaena variabilis).